The primary structure comprises 689 residues: Glycine--tRNA ligase beta subunit (689 aa).

Belongs to the class-II aminoacyl-tRNA synthetase family. As to quaternary structure, tetramer of two alpha and two beta subunits.

It localises to the cytoplasm. The catalysed reaction is tRNA(Gly) + glycine + ATP = glycyl-tRNA(Gly) + AMP + diphosphate. This is Glycine--tRNA ligase beta subunit from Edwardsiella ictaluri (strain 93-146).